The chain runs to 289 residues: Energy-coupling factor transporter ATP-binding protein EcfA2 (289 aa).

Residues 3–245 (IEFKNVDYVY…QEWVKKHYLD (243 aa)) enclose the ABC transporter domain. 40–47 (GHTGSGKS) lines the ATP pocket.

It belongs to the ABC transporter superfamily. Energy-coupling factor EcfA family. As to quaternary structure, forms a stable energy-coupling factor (ECF) transporter complex composed of 2 membrane-embedded substrate-binding proteins (S component), 2 ATP-binding proteins (A component) and 2 transmembrane proteins (T component).

Its subcellular location is the cell membrane. Functionally, ATP-binding (A) component of a common energy-coupling factor (ECF) ABC-transporter complex. Unlike classic ABC transporters this ECF transporter provides the energy necessary to transport a number of different substrates. The sequence is that of Energy-coupling factor transporter ATP-binding protein EcfA2 from Lactobacillus johnsonii (strain CNCM I-12250 / La1 / NCC 533).